We begin with the raw amino-acid sequence, 1229 residues long: Vacuolar protein sorting-associated protein 8 homolog (1229 aa).

The interval 67 to 89 (EFGMPVPHATPTPSIGEDSTIRT) is disordered. A CHCR repeat occupies 901 to 1063 (ETTRLLSLHY…ILPHQELQSI (163 aa)). An RING-type; atypical zinc finger spans residues 1148-1189 (CSMCRQRLYDHSQVLIFGGCGHGIHEQCMEESETQFEECPRC).

It belongs to the VPS8 family. In terms of assembly, component of the class C core vacuole/endosome tethering (CORVET) complex composed of at least Vps8, dor/Vps18, car/Vps33A and Vps16A; unlike in other species, Vps11 is not part of the Drosophila complex. Due to the reduced number of components the Drosophila CORVET complex is often referred to as the miniCORVET complex. Has a higher affinity than the homotypic fusion and vacuole protein sorting (HOPS) tethering complex-specific component lt/Vps41 for Vps16A, car/Vps33A and dor/Vps18, the core components shared by both tethering complexes.

Its subcellular location is the early endosome. Part of the class C core vacuole/endosome tethering (CORVET) complex involved in endo-lysosomal vesicle trafficking and lysosome biogenesis by facilitating docking and fusion of endosomal vesicles. The CORVET complex acts upstream of the homotypic fusion and vacuole protein sorting (HOPS) tethering complex but is not involved in autophagic flux. The CORVET complex may cooperate with the early endosomal tether Rbsn-5 to mediate endosomal fusion. As part of the CORVET complex recruited to endosomes by activated GTP-bound Rab5. Specifically required for endocytic trafficking in a subset of cells, such as hemocytes and nephrocytes, which are highly active in endocytosis. In Drosophila melanogaster (Fruit fly), this protein is Vacuolar protein sorting-associated protein 8 homolog.